The following is an 858-amino-acid chain: Bifunctional uridylyltransferase/uridylyl-removing enzyme (858 aa).

The segment at 1–324 is uridylyltransferase; the sequence is MSAHAAPSPE…PATSGITRVL (324 aa). The segment at 325 to 681 is uridylyl-removing; the sequence is SADRFVEKQG…ARPSPIGDAL (357 aa). The 123-residue stretch at 443 to 565 folds into the HD domain; that stretch reads VDQHILMVLR…VGNERYLTAL (123 aa). 2 ACT domains span residues 682-763 and 790-858; these read QVLV…PSKG and ILSV…AIAV.

Belongs to the GlnD family. The cofactor is Mg(2+).

The catalysed reaction is [protein-PII]-L-tyrosine + UTP = [protein-PII]-uridylyl-L-tyrosine + diphosphate. It carries out the reaction [protein-PII]-uridylyl-L-tyrosine + H2O = [protein-PII]-L-tyrosine + UMP + H(+). Uridylyltransferase (UTase) activity is inhibited by glutamine, while glutamine activates uridylyl-removing (UR) activity. In terms of biological role, modifies, by uridylylation and deuridylylation, the PII regulatory proteins (GlnB and homologs), in response to the nitrogen status of the cell that GlnD senses through the glutamine level. Under low glutamine levels, catalyzes the conversion of the PII proteins and UTP to PII-UMP and PPi, while under higher glutamine levels, GlnD hydrolyzes PII-UMP to PII and UMP (deuridylylation). Thus, controls uridylylation state and activity of the PII proteins, and plays an important role in the regulation of nitrogen assimilation and metabolism. This is Bifunctional uridylyltransferase/uridylyl-removing enzyme from Burkholderia orbicola (strain MC0-3).